The following is a 245-amino-acid chain: tRNA (guanine-N(1)-)-methyltransferase (245 aa).

Residues G113 and 133-138 each bind S-adenosyl-L-methionine; that span reads IGDYVL.

This sequence belongs to the RNA methyltransferase TrmD family. In terms of assembly, homodimer.

The protein localises to the cytoplasm. It carries out the reaction guanosine(37) in tRNA + S-adenosyl-L-methionine = N(1)-methylguanosine(37) in tRNA + S-adenosyl-L-homocysteine + H(+). In terms of biological role, specifically methylates guanosine-37 in various tRNAs. The sequence is that of tRNA (guanine-N(1)-)-methyltransferase from Histophilus somni (strain 129Pt) (Haemophilus somnus).